Consider the following 851-residue polypeptide: Oligopeptide transport ATP-binding protein OppF (851 aa).

In terms of domain architecture, ABC transporter spans 14–788 (VKALSMLFKV…PVHPYTRSLI (775 aa)). 48 to 55 (GESGSGKS) provides a ligand contact to ATP.

This sequence belongs to the ABC transporter superfamily. As to quaternary structure, the complex is composed of two ATP-binding proteins (OppD and OppF), two transmembrane proteins (OppB and OppC) and a solute-binding protein (OppA).

Its subcellular location is the cell membrane. It carries out the reaction a [peptide](out) + ATP + H2O = a [peptide](in) + ADP + phosphate + H(+). Functionally, part of the ABC transporter complex OppABCDF involved in the uptake of oligopeptides. Probably responsible for energy coupling to the transport system. This Mycoplasma pneumoniae (strain ATCC 29342 / M129 / Subtype 1) (Mycoplasmoides pneumoniae) protein is Oligopeptide transport ATP-binding protein OppF (oppF).